A 265-amino-acid chain; its full sequence is Expansin-like A2 (265 aa).

Positions 1–21 (MLQGFLFLLSVVLLFSSSAAA) are cleaved as a signal peptide. One can recognise an Expansin-like EG45 domain in the interval 42 to 148 (SGACAYGSMA…RRVPCDYGNK (107 aa)). Residues Asn-100 and Asn-103 are each glycosylated (N-linked (GlcNAc...) asparagine). One can recognise an Expansin-like CBD domain in the interval 162–244 (NYLAIKLLYQ…NWEAGKSYDA (83 aa)).

This sequence belongs to the expansin family. Expansin-like A subfamily.

It is found in the secreted. This Arabidopsis thaliana (Mouse-ear cress) protein is Expansin-like A2 (EXLA2).